A 276-amino-acid chain; its full sequence is Aldo-keto reductase Mkms_1985 (276 aa).

The active-site Proton donor is Tyr-50. Residues Leu-190, Ile-228, Lys-230, Ser-231, Val-232, Arg-236, Ser-239, and Asn-240 each coordinate NADPH. The tract at residues 257–276 (SSLEDGSRLGPDPKTFNFTG) is disordered.

This sequence belongs to the aldo/keto reductase family.

This is Aldo-keto reductase Mkms_1985 from Mycobacterium sp. (strain KMS).